We begin with the raw amino-acid sequence, 414 residues long: Probable protein phosphatase 2C 9 (414 aa).

Residues 15 to 37 traverse the membrane as a helical segment; sequence TATAAVAAAVSASAAAAVSSAID. Positions 56–95 are disordered; sequence LQAGEDGRPGKRQRLARTASGAPRPDEDSASERPSCGRTE. Residues 99–410 form the PPM-type phosphatase domain; the sequence is RYGVTAVCGR…DNVSVVVVDL (312 aa). 2 residues coordinate Mn(2+): aspartate 136 and glycine 137. Residues 186-195 show a composition bias toward basic and acidic residues; it reads GNRASTRSDD. A disordered region spans residues 186–212; the sequence is GNRASTRSDDEPACPCEQQTPSRRDHA. Mn(2+) is bound at residue aspartate 319. The tract at residues 345 to 372 is disordered; the sequence is APAARPSGVPSSAEAAETENGGAASVKG. Positions 355–369 are enriched in low complexity; sequence SSAEAAETENGGAAS. Aspartate 401 serves as a coordination point for Mn(2+).

Belongs to the PP2C family. The cofactor is Mg(2+). Mn(2+) serves as cofactor.

The protein resides in the membrane. The catalysed reaction is O-phospho-L-seryl-[protein] + H2O = L-seryl-[protein] + phosphate. It catalyses the reaction O-phospho-L-threonyl-[protein] + H2O = L-threonyl-[protein] + phosphate. The sequence is that of Probable protein phosphatase 2C 9 from Oryza sativa subsp. japonica (Rice).